Reading from the N-terminus, the 621-residue chain is Kelch-like protein 40 (621 aa).

Positions 33-98 (LDCVVRAGER…LYTSEIALDE (66 aa)) constitute a BTB domain. The BACK domain occupies 133–239 (CLAVFRLGLL…PRAFLESRVE (107 aa)). Positions 265 to 295 (ITTLRKKKKGKDGAGAKEADKGTSKAKAEED) are disordered. The span at 275–292 (KDGAGAKEADKGTSKAKA) shows a compositional bias: basic and acidic residues. Kelch repeat units lie at residues 360–412 (QVFV…EALN), 413–462 (SIYV…SHMD), 463–510 (LVYV…VHDG), 512–557 (IIVA…SLVG), and 559–613 (LYAI…PVRL).

It belongs to the KLHL40 family. Component of the BCR(KLHL40) E3 ubiquitin ligase complex, at least composed of CUL3, KLHL40 and RBX1. Interacts with LMOD3. As to expression, highly expressed in fetal (19, 23 and 31 weeks of gestation) and adult skeletal muscle; expression levels tend to be higher in fetal compared to postnatal muscles (at protein level). Also expressed in fetal and adult heart.

It is found in the cytoplasm. Its subcellular location is the myofibril. The protein localises to the sarcomere. It localises to the a band. The protein resides in the i band. Functionally, substrate-specific adapter of a BCR (BTB-CUL3-RBX1) E3 ubiquitin ligase complex that acts as a key regulator of skeletal muscle development. The BCR(KLHL40) complex acts by mediating ubiquitination and degradation of TFDP1, thereby regulating the activity of the E2F:DP transcription factor complex. Promotes stabilization of LMOD3 by acting as a negative regulator of LMOD3 ubiquitination; the molecular process by which it negatively regulates ubiquitination of LMOD3 is however unclear. This chain is Kelch-like protein 40, found in Homo sapiens (Human).